A 1582-amino-acid polypeptide reads, in one-letter code: Dynein axonemal assembly factor 1 homolog (1582 aa).

LRR repeat units lie at residues 38-60 (RLNDVLYLHFQGYQCIENLDEYT), 61-82 (ELKSLWLESNAISEIQNLTKLT), 83-104 (KLKCLYLQNNLITKMENLEFNR), 105-126 (ELDTLNLSQNHIRKIENIGTDI), 129-150 (VLNTLNITSNYLTDSASLAALV), and 154-175 (TLSVLDLSNNRIDDILIVKIFE). An LRRCT domain is found at 189 to 227 (PVVSRLPQYRKTLILACKELTYLDSRPVFPRDRACAEAW). Disordered stretches follow at residues 245–420 (AERR…SEMD), 560–587 (SSDVQEQAKDPSESDEEPTEEEMEVKSQ), 859–878 (FSKDTPESLDAQLAKDEDRR), 913–942 (DTGELEELPPPPELISDSESEKEVEEDDDA), 1073–1092 (SSNEDLEAKHKSNDDPLVER), 1101–1137 (MQRMKEHEERARELQEQLEKEKEEENSGPIKLSMGEG), 1150–1218 (TEII…QAEG), 1305–1345 (KDNE…TAKD), 1358–1438 (LDPE…PYQT), 1484–1517 (EDSKIGDGPTEKFLDQKAQDNTENTDERPENPKN), and 1529–1548 (PSESLEDTEATETPEVSTEQ). Positions 313-327 (ESQASEHSTTSSTSA) are enriched in low complexity. Residues 339–392 (HIAERISNRRVKPLEGRPKVLYDEAASGDEKAVTTTDSKKDSNAEDLPELKDIT) show a composition bias toward basic and acidic residues. Over residues 409-420 (TLLQSDSGSEMD) the composition is skewed to polar residues. The span at 572–582 (ESDEEPTEEEM) shows a compositional bias: acidic residues. Positions 928 to 942 (SDSESEKEVEEDDDA) are enriched in acidic residues. Basic and acidic residues-rich tracts occupy residues 1078–1092 (LEAKHKSNDDPLVER) and 1103–1125 (RMKEHEERARELQEQLEKEKEEE). Residues 1166 to 1178 (EGGAQQEEGGAQS) show a composition bias toward low complexity. 3 stretches are compositionally biased toward basic and acidic residues: residues 1321–1335 (PKEEHIPEVKSETET), 1398–1427 (SALKETTEIGDSEKQENKTQDETLDPKDTE), and 1484–1514 (EDSKIGDGPTEKFLDQKAQDNTENTDERPEN). Residues 1529-1540 (PSESLEDTEATE) are compositionally biased toward acidic residues.

It belongs to the DNAAF1 family.

Its subcellular location is the cell projection. It is found in the cilium. Cilium-specific protein required for cilia structures. The sequence is that of Dynein axonemal assembly factor 1 homolog (dtr) from Drosophila pseudoobscura pseudoobscura (Fruit fly).